The following is a 91-amino-acid chain: N(2)-fixation sustaining protein CowN (91 aa).

Belongs to the CowN family.

Is required to sustain N(2)-dependent growth in the presence of low levels of carbon monoxide (CO). Probably acts by protecting the N(2) fixation ability of the nitrogenase complex, which is inactivated in the presence of CO. This Beijerinckia indica subsp. indica (strain ATCC 9039 / DSM 1715 / NCIMB 8712) protein is N(2)-fixation sustaining protein CowN.